We begin with the raw amino-acid sequence, 714 residues long: DNA ligase (714 aa).

NAD(+) is bound by residues 40-44 (DADYD), 90-91 (SL), and Glu124. The N6-AMP-lysine intermediate role is filled by Lys126. Residues Arg147, Glu183, Lys304, and Lys328 each coordinate NAD(+). 4 residues coordinate Zn(2+): Cys420, Cys423, Cys438, and Cys444. The 81-residue stretch at 634-714 (TRDSEVSGKT…EWAAIVAAAG (81 aa)) folds into the BRCT domain.

This sequence belongs to the NAD-dependent DNA ligase family. LigA subfamily. Mg(2+) serves as cofactor. Requires Mn(2+) as cofactor.

It carries out the reaction NAD(+) + (deoxyribonucleotide)n-3'-hydroxyl + 5'-phospho-(deoxyribonucleotide)m = (deoxyribonucleotide)n+m + AMP + beta-nicotinamide D-nucleotide.. Functionally, DNA ligase that catalyzes the formation of phosphodiester linkages between 5'-phosphoryl and 3'-hydroxyl groups in double-stranded DNA using NAD as a coenzyme and as the energy source for the reaction. It is essential for DNA replication and repair of damaged DNA. This Sphingopyxis alaskensis (strain DSM 13593 / LMG 18877 / RB2256) (Sphingomonas alaskensis) protein is DNA ligase.